A 498-amino-acid chain; its full sequence is Probable malate:quinone oxidoreductase (498 aa).

Belongs to the MQO family. FAD serves as cofactor.

The catalysed reaction is (S)-malate + a quinone = a quinol + oxaloacetate. It functions in the pathway carbohydrate metabolism; tricarboxylic acid cycle; oxaloacetate from (S)-malate (quinone route): step 1/1. The sequence is that of Probable malate:quinone oxidoreductase from Granulibacter bethesdensis (strain ATCC BAA-1260 / CGDNIH1).